The primary structure comprises 363 residues: NAD(P)H-quinone oxidoreductase subunit 1, chloroplastic (363 aa).

7 helical membrane-spanning segments follow: residues Leu30–Leu50, Phe98–Phe118, Val129–Gly149, Ala165–Leu185, Phe253–Ile273, Thr303–Thr323, and Leu336–Thr356.

Belongs to the complex I subunit 1 family. In terms of assembly, NDH is composed of at least 16 different subunits, 5 of which are encoded in the nucleus.

It is found in the plastid. The protein localises to the chloroplast thylakoid membrane. It carries out the reaction a plastoquinone + NADH + (n+1) H(+)(in) = a plastoquinol + NAD(+) + n H(+)(out). It catalyses the reaction a plastoquinone + NADPH + (n+1) H(+)(in) = a plastoquinol + NADP(+) + n H(+)(out). Its function is as follows. NDH shuttles electrons from NAD(P)H:plastoquinone, via FMN and iron-sulfur (Fe-S) centers, to quinones in the photosynthetic chain and possibly in a chloroplast respiratory chain. The immediate electron acceptor for the enzyme in this species is believed to be plastoquinone. Couples the redox reaction to proton translocation, and thus conserves the redox energy in a proton gradient. The polypeptide is NAD(P)H-quinone oxidoreductase subunit 1, chloroplastic (Pelargonium hortorum (Common geranium)).